Reading from the N-terminus, the 209-residue chain is GTP cyclohydrolase 1 (209 aa).

Zn(2+)-binding residues include C100, H103, and C171.

Belongs to the GTP cyclohydrolase I family. Toroid-shaped homodecamer, composed of two pentamers of five dimers.

The catalysed reaction is GTP + H2O = 7,8-dihydroneopterin 3'-triphosphate + formate + H(+). The protein operates within cofactor biosynthesis; 7,8-dihydroneopterin triphosphate biosynthesis; 7,8-dihydroneopterin triphosphate from GTP: step 1/1. In Ralstonia nicotianae (strain ATCC BAA-1114 / GMI1000) (Ralstonia solanacearum), this protein is GTP cyclohydrolase 1.